The primary structure comprises 435 residues: Diguanylate cyclase TpbB (435 aa).

The Cytoplasmic segment spans residues 1 to 22; sequence MNRRRRYTGSNPSLRRVLYRAH. The chain crosses the membrane as a helical span at residues 23-43; sequence LGVALVAVFTAGLAVTLVGLL. At 44 to 154 the chain is on the periplasmic side; the sequence is TLRAYADPNQ…VKGSGGSLLR (111 aa). A helical transmembrane segment spans residues 155-175; it reads FLLTGFAGMVLCLLLTALGAF. The Cytoplasmic segment spans residues 176–435; that stretch reads YLSRRLVRGI…DSATPEAPPK (260 aa). In terms of domain architecture, HAMP spans 183-236; the sequence is RGIVGPLDQLAKVAHTVRRERDFEKRVPEAGIAELSQLGEDFNALLDELESWQA. The region spanning 279–415 is the GGDEF domain; sequence EQLAVLFIDS…GSRRLAELND (137 aa). Mg(2+) contacts are provided by S288 and D330. D330 acts as the Proton acceptor in catalysis. Over residues 413-426 the composition is skewed to basic and acidic residues; that stretch reads LNDPRILQEEKEID. The tract at residues 413–435 is disordered; sequence LNDPRILQEEKEIDSATPEAPPK.

Homodimer. Interacts with YfiR. The cofactor is Mg(2+). Phosphorylated at both Tyr residues and Ser/Thr residues. Dephosphorylated and inactivated by TpbA.

Its subcellular location is the cell inner membrane. It carries out the reaction 2 GTP = 3',3'-c-di-GMP + 2 diphosphate. The protein operates within purine metabolism; 3',5'-cyclic di-GMP biosynthesis. With respect to regulation, activity is tightly controlled by YfiR, a small periplasmic protein, and the OmpA/Pal-like outer-membrane lipoprotein YfiB. Diguanylate cyclase activity is inhibited by the specific interaction of YfiR with the TpbB periplasmic domain and is activated by YfiB, which releases the YfiR-mediated repression through sequestration of YfiR to the outer membrane. Release of repression leads to a conformational shift in TpbB/YfiN that propagates through the PAS and transmembrane domains to switch the cytoplasmic HAMP domain from an inactive to an active conformation and activate the C-terminal catalytic GGDEF domain. Thus, TpbB/YfiN appears to function by switching between discrete inactive and active functional states depending on the presence or absence of bound YfiR. Activity is also controlled by dephosphorylation of the periplasmic domain by the tyrosine phosphatase TpbA. These two mechanisms of regulation could in principle work in parallel or as part of the same regulatory pathway. Does not undergo product feedback inhibition. Functionally, catalyzes the synthesis of cyclic-di-GMP (c-di-GMP) via the condensation of 2 GTP molecules. Its function is as follows. Part of the YfiB-TpbB-YfiR (or yfiBNR) system, encoding a tripartite signaling module that modulates intracellular c-di-GMP levels. The system is a key regulator of the small colony variant (SCV) phenotype, and plays an important role in biofilm formation and in vivo persistence. The c-di-GMP produced by TpbB/YfiN stimulates the production of the Pel and Psl exopolysaccharides, which promotes surface attachment, generates an SCV phenotype and confers resistance against phagocytosis. In Pseudomonas aeruginosa (strain ATCC 15692 / DSM 22644 / CIP 104116 / JCM 14847 / LMG 12228 / 1C / PRS 101 / PAO1), this protein is Diguanylate cyclase TpbB.